A 103-amino-acid chain; its full sequence is Small ribosomal subunit protein uS10 (103 aa).

This sequence belongs to the universal ribosomal protein uS10 family. In terms of assembly, part of the 30S ribosomal subunit.

Functionally, involved in the binding of tRNA to the ribosomes. This Methylibium petroleiphilum (strain ATCC BAA-1232 / LMG 22953 / PM1) protein is Small ribosomal subunit protein uS10.